Consider the following 708-residue polypeptide: Polyribonucleotide nucleotidyltransferase (708 aa).

Residues aspartate 488 and aspartate 494 each contribute to the Mg(2+) site. In terms of domain architecture, KH spans 555–615 (PIIKVTKVDP…ENVDKAIELI (61 aa)). Residues 625–692 (GEVLEGKVTR…DLGRLQFKRV (68 aa)) form the S1 motif domain.

This sequence belongs to the polyribonucleotide nucleotidyltransferase family. Mg(2+) serves as cofactor.

It localises to the cytoplasm. The catalysed reaction is RNA(n+1) + phosphate = RNA(n) + a ribonucleoside 5'-diphosphate. Its function is as follows. Involved in mRNA degradation. Catalyzes the phosphorolysis of single-stranded polyribonucleotides processively in the 3'- to 5'-direction. In Thermotoga sp. (strain RQ2), this protein is Polyribonucleotide nucleotidyltransferase.